A 257-amino-acid chain; its full sequence is Glutamate racemase (257 aa).

Substrate is bound by residues 12–13 (DS) and 44–45 (YG). The active-site Proton donor/acceptor is the Cys75. 76-77 (NT) lines the substrate pocket. The active-site Proton donor/acceptor is the Cys185. 186 to 187 (TH) provides a ligand contact to substrate.

The protein belongs to the aspartate/glutamate racemases family.

It catalyses the reaction L-glutamate = D-glutamate. Its pathway is cell wall biogenesis; peptidoglycan biosynthesis. Provides the (R)-glutamate required for cell wall biosynthesis. In Clostridium botulinum (strain Loch Maree / Type A3), this protein is Glutamate racemase.